We begin with the raw amino-acid sequence, 34 residues long: Photosystem II reaction center protein M (34 aa).

The chain crosses the membrane as a helical span at residues 5 to 25 (ILAFIATALFILVPTAFLLII).

This sequence belongs to the PsbM family. PSII is composed of 1 copy each of membrane proteins PsbA, PsbB, PsbC, PsbD, PsbE, PsbF, PsbH, PsbI, PsbJ, PsbK, PsbL, PsbM, PsbT, PsbX, PsbY, PsbZ, Psb30/Ycf12, at least 3 peripheral proteins of the oxygen-evolving complex and a large number of cofactors. It forms dimeric complexes.

Its subcellular location is the plastid. It is found in the chloroplast thylakoid membrane. In terms of biological role, one of the components of the core complex of photosystem II (PSII). PSII is a light-driven water:plastoquinone oxidoreductase that uses light energy to abstract electrons from H(2)O, generating O(2) and a proton gradient subsequently used for ATP formation. It consists of a core antenna complex that captures photons, and an electron transfer chain that converts photonic excitation into a charge separation. This subunit is found at the monomer-monomer interface. The polypeptide is Photosystem II reaction center protein M (Phaseolus vulgaris (Kidney bean)).